Reading from the N-terminus, the 304-residue chain is MSWIERIKSNITPTRKASIPEGVWTKCDSCGQVLYRAELERNLEVCPKCDHHMRMSARNRLHSLLDEGSLVELGSELEPKDVLKFRDSKKYKDRLASAQKETGEKDALVVMKGTLHDMPIVAAAFEFSFMGGSMGSVVGARFVRAVEQALEDNCPLICFSASGGARMQEALMSLMQMAKTSAALAKMQERGLPYISVLTDPTMGGVSASFAMLGDLNIAEPKALIGFAGPRVIEQTVREKLPPGFQRSEFLIEKGAIDMIVRRPEMRLKLASVLAKLMNLPAPNPDAPREGEVVPPVPDQEPEA.

One can recognise a CoA carboxyltransferase N-terminal domain in the interval 23–292 (VWTKCDSCGQ…PNPDAPREGE (270 aa)). Residues Cys27, Cys30, Cys46, and Cys49 each contribute to the Zn(2+) site. A C4-type zinc finger spans residues 27 to 49 (CDSCGQVLYRAELERNLEVCPKC). The interval 281–304 (PAPNPDAPREGEVVPPVPDQEPEA) is disordered. The span at 295–304 (PPVPDQEPEA) shows a compositional bias: pro residues.

The protein belongs to the AccD/PCCB family. In terms of assembly, acetyl-CoA carboxylase is a heterohexamer composed of biotin carboxyl carrier protein (AccB), biotin carboxylase (AccC) and two subunits each of ACCase subunit alpha (AccA) and ACCase subunit beta (AccD). The cofactor is Zn(2+).

The protein resides in the cytoplasm. It carries out the reaction N(6)-carboxybiotinyl-L-lysyl-[protein] + acetyl-CoA = N(6)-biotinyl-L-lysyl-[protein] + malonyl-CoA. It functions in the pathway lipid metabolism; malonyl-CoA biosynthesis; malonyl-CoA from acetyl-CoA: step 1/1. Component of the acetyl coenzyme A carboxylase (ACC) complex. Biotin carboxylase (BC) catalyzes the carboxylation of biotin on its carrier protein (BCCP) and then the CO(2) group is transferred by the transcarboxylase to acetyl-CoA to form malonyl-CoA. This Citrobacter koseri (strain ATCC BAA-895 / CDC 4225-83 / SGSC4696) protein is Acetyl-coenzyme A carboxylase carboxyl transferase subunit beta.